A 378-amino-acid chain; its full sequence is Anhydro-N-acetylmuramic acid kinase 2 (378 aa).

An ATP-binding site is contributed by 14-22; sequence GTVLDGNID.

It belongs to the anhydro-N-acetylmuramic acid kinase family.

It catalyses the reaction 1,6-anhydro-N-acetyl-beta-muramate + ATP + H2O = N-acetyl-D-muramate 6-phosphate + ADP + H(+). It functions in the pathway amino-sugar metabolism; 1,6-anhydro-N-acetylmuramate degradation. The protein operates within cell wall biogenesis; peptidoglycan recycling. Catalyzes the specific phosphorylation of 1,6-anhydro-N-acetylmuramic acid (anhMurNAc) with the simultaneous cleavage of the 1,6-anhydro ring, generating MurNAc-6-P. Is required for the utilization of anhMurNAc either imported from the medium or derived from its own cell wall murein, and thus plays a role in cell wall recycling. The chain is Anhydro-N-acetylmuramic acid kinase 2 from Jannaschia sp. (strain CCS1).